We begin with the raw amino-acid sequence, 274 residues long: Glutamate--cysteine ligase regulatory subunit (274 aa).

Residue serine 59 is modified to Phosphoserine. Lysine 263 is modified (N6-acetyllysine).

This sequence belongs to the aldo/keto reductase family. Glutamate--cysteine ligase light chain subfamily. As to quaternary structure, heterodimer of a catalytic heavy chain and a regulatory light chain.

The protein operates within sulfur metabolism; glutathione biosynthesis; glutathione from L-cysteine and L-glutamate: step 1/2. This chain is Glutamate--cysteine ligase regulatory subunit (Gclm), found in Mus musculus (Mouse).